The sequence spans 195 residues: Imidazoleglycerol-phosphate dehydratase (195 aa).

This sequence belongs to the imidazoleglycerol-phosphate dehydratase family.

The protein resides in the cytoplasm. The catalysed reaction is D-erythro-1-(imidazol-4-yl)glycerol 3-phosphate = 3-(imidazol-4-yl)-2-oxopropyl phosphate + H2O. It participates in amino-acid biosynthesis; L-histidine biosynthesis; L-histidine from 5-phospho-alpha-D-ribose 1-diphosphate: step 6/9. The sequence is that of Imidazoleglycerol-phosphate dehydratase from Bordetella bronchiseptica (strain ATCC BAA-588 / NCTC 13252 / RB50) (Alcaligenes bronchisepticus).